Consider the following 323-residue polypeptide: V-type ATP synthase subunit C (323 aa).

The protein belongs to the V-ATPase V0D/AC39 subunit family.

Functionally, produces ATP from ADP in the presence of a proton gradient across the membrane. In Thermus thermophilus (strain ATCC 27634 / DSM 579 / HB8), this protein is V-type ATP synthase subunit C (atpC).